Here is a 268-residue protein sequence, read N- to C-terminus: Undecaprenyl-diphosphatase (268 aa).

The next 8 helical transmembrane spans lie at 4 to 24 (STTLVALVLGLLEGLTEFIPV), 50 to 70 (IQLGAVLAVLTVYASKLISVI), 84 to 104 (AAVLLAFLPAVVVGVMAHGFI), 109 to 129 (FETPILIAIMLILGGIILLFV), 144 to 164 (VPLGVALKIGFFQCLAMVPGV), 184 to 204 (AAEFSFFLSMPTMAGAFAFDL), 214 to 234 (GALGEIAVGFVAAFLAAVLVV), and 245 to 265 (GYSLFGWWRIIVGSIALAALL).

The protein belongs to the UppP family.

It localises to the cell inner membrane. The catalysed reaction is di-trans,octa-cis-undecaprenyl diphosphate + H2O = di-trans,octa-cis-undecaprenyl phosphate + phosphate + H(+). Catalyzes the dephosphorylation of undecaprenyl diphosphate (UPP). Confers resistance to bacitracin. This is Undecaprenyl-diphosphatase from Cereibacter sphaeroides (strain ATCC 17025 / ATH 2.4.3) (Rhodobacter sphaeroides).